The following is a 314-amino-acid chain: Probable cell division protein WhiA (314 aa).

Positions 274-305 (SLAELGDRLEISKSGANHRMRKLKALEDMINA) form a DNA-binding region, H-T-H motif.

This sequence belongs to the WhiA family.

Its function is as follows. Involved in cell division and chromosome segregation. The protein is Probable cell division protein WhiA of Leuconostoc citreum (strain KM20).